The sequence spans 148 residues: Lysozyme C (148 aa).

The N-terminal stretch at 1–18 (MRALIILGLVLLSVTVQG) is a signal peptide. The 130-residue stretch at 19–148 (KIFERCELAR…VSQYVKGCGV (130 aa)) folds into the C-type lysozyme domain. Disulfide bonds link Cys24/Cys146, Cys48/Cys134, Cys83/Cys99, and Cys95/Cys113. Residues Glu53 and Asp71 contribute to the active site.

It belongs to the glycosyl hydrolase 22 family. In terms of assembly, monomer.

It is found in the secreted. The enzyme catalyses Hydrolysis of (1-&gt;4)-beta-linkages between N-acetylmuramic acid and N-acetyl-D-glucosamine residues in a peptidoglycan and between N-acetyl-D-glucosamine residues in chitodextrins.. Lysozymes have primarily a bacteriolytic function; those in tissues and body fluids are associated with the monocyte-macrophage system and enhance the activity of immunoagents. Also plays a role in digestion in this species. This chain is Lysozyme C (LYZ), found in Trachypithecus francoisi (Francois' leaf monkey).